The following is a 125-amino-acid chain: Large ribosomal subunit protein bL12 (125 aa).

Belongs to the bacterial ribosomal protein bL12 family. In terms of assembly, homodimer. Part of the ribosomal stalk of the 50S ribosomal subunit. Forms a multimeric L10(L12)X complex, where L10 forms an elongated spine to which 2 to 4 L12 dimers bind in a sequential fashion. Binds GTP-bound translation factors.

Functionally, forms part of the ribosomal stalk which helps the ribosome interact with GTP-bound translation factors. Is thus essential for accurate translation. The sequence is that of Large ribosomal subunit protein bL12 from Gluconobacter oxydans (strain 621H) (Gluconobacter suboxydans).